A 132-amino-acid polypeptide reads, in one-letter code: Small ribosomal subunit protein uS11 (132 aa).

Belongs to the universal ribosomal protein uS11 family. As to quaternary structure, part of the 30S ribosomal subunit. Interacts with proteins S7 and S18. Binds to IF-3.

Located on the platform of the 30S subunit, it bridges several disparate RNA helices of the 16S rRNA. Forms part of the Shine-Dalgarno cleft in the 70S ribosome. The sequence is that of Small ribosomal subunit protein uS11 from Chlamydia trachomatis serovar L2 (strain ATCC VR-902B / DSM 19102 / 434/Bu).